Consider the following 199-residue polypeptide: GTP cyclohydrolase-2 (199 aa).

49-53 provides a ligand contact to GTP; sequence RIHSE. Residues Cys-54, Cys-65, and Cys-67 each contribute to the Zn(2+) site. GTP-binding positions include Gln-70, 92 to 94, and Thr-114; that span reads EGR. Asp-126 (proton acceptor) is an active-site residue. The active-site Nucleophile is Arg-128. GTP is bound by residues Thr-149 and Lys-154.

The protein belongs to the GTP cyclohydrolase II family. In terms of assembly, homodimer. Zn(2+) serves as cofactor.

The catalysed reaction is GTP + 4 H2O = 2,5-diamino-6-hydroxy-4-(5-phosphoribosylamino)-pyrimidine + formate + 2 phosphate + 3 H(+). It functions in the pathway cofactor biosynthesis; riboflavin biosynthesis; 5-amino-6-(D-ribitylamino)uracil from GTP: step 1/4. Its function is as follows. Catalyzes the conversion of GTP to 2,5-diamino-6-ribosylamino-4(3H)-pyrimidinone 5'-phosphate (DARP), formate and pyrophosphate. This is GTP cyclohydrolase-2 from Proteus mirabilis (strain HI4320).